Consider the following 189-residue polypeptide: Interferon alpha-H (189 aa).

The first 23 residues, 1–23 (MAPAWSFLLALLLLSCNAICSLG), serve as a signal peptide directing secretion. Intrachain disulfides connect C24–C122 and C52–C162.

This sequence belongs to the alpha/beta interferon family.

It localises to the secreted. Its function is as follows. Produced by macrophages, IFN-alpha have antiviral activities. Interferon stimulates the production of two enzymes: a protein kinase and an oligoadenylate synthetase. The polypeptide is Interferon alpha-H (IFNAH) (Bos taurus (Bovine)).